A 276-amino-acid polypeptide reads, in one-letter code: Rhamnulose-1-phosphate aldolase (276 aa).

Residue Glu-117 is part of the active site. Zn(2+)-binding residues include His-141, His-143, and His-212.

The protein belongs to the aldolase class II family. RhaD subfamily. As to quaternary structure, homotetramer. The cofactor is Zn(2+).

It is found in the cytoplasm. It catalyses the reaction L-rhamnulose 1-phosphate = (S)-lactaldehyde + dihydroxyacetone phosphate. Its pathway is carbohydrate degradation; L-rhamnose degradation; glycerone phosphate from L-rhamnose: step 3/3. In terms of biological role, catalyzes the reversible cleavage of L-rhamnulose-1-phosphate to dihydroxyacetone phosphate (DHAP) and L-lactaldehyde. This chain is Rhamnulose-1-phosphate aldolase, found in Klebsiella pneumoniae subsp. pneumoniae (strain ATCC 700721 / MGH 78578).